The sequence spans 358 residues: Probable ABC transporter periplasmic-binding protein y4fP (358 aa).

The first 46 residues, 1–46 (MRNVIKLTWSRRKRSASLDKGENIMKLAFAFATAAIVVAAAFPALA), serve as a signal peptide directing secretion.

The protein belongs to the bacterial solute-binding protein 1 family.

The protein resides in the periplasm. Probably part of the binding-protein-dependent transport system y4fNOP. This is Probable ABC transporter periplasmic-binding protein y4fP from Sinorhizobium fredii (strain NBRC 101917 / NGR234).